A 731-amino-acid chain; its full sequence is DNA ligase (731 aa).

NAD(+) is bound by residues 59-63 (DSEYD), 108-109 (SL), and Glu142. Lys144 functions as the N6-AMP-lysine intermediate in the catalytic mechanism. Arg165, Glu202, Lys318, and Lys342 together coordinate NAD(+). Zn(2+) contacts are provided by Cys434, Cys437, Cys452, and Cys458. The 87-residue stretch at 645–731 (LASSPLSGKI…ENDGQDSIKI (87 aa)) folds into the BRCT domain.

Belongs to the NAD-dependent DNA ligase family. LigA subfamily. Mg(2+) is required as a cofactor. Requires Mn(2+) as cofactor.

It carries out the reaction NAD(+) + (deoxyribonucleotide)n-3'-hydroxyl + 5'-phospho-(deoxyribonucleotide)m = (deoxyribonucleotide)n+m + AMP + beta-nicotinamide D-nucleotide.. Functionally, DNA ligase that catalyzes the formation of phosphodiester linkages between 5'-phosphoryl and 3'-hydroxyl groups in double-stranded DNA using NAD as a coenzyme and as the energy source for the reaction. It is essential for DNA replication and repair of damaged DNA. The polypeptide is DNA ligase (Zymomonas mobilis subsp. mobilis (strain ATCC 31821 / ZM4 / CP4)).